We begin with the raw amino-acid sequence, 425 residues long: Serine hydroxymethyltransferase (425 aa).

Residues leucine 128 and 132-134 (GHL) contribute to the (6S)-5,6,7,8-tetrahydrofolate site. Lysine 237 carries the post-translational modification N6-(pyridoxal phosphate)lysine.

It belongs to the SHMT family. Homodimer. Pyridoxal 5'-phosphate serves as cofactor.

Its subcellular location is the cytoplasm. The catalysed reaction is (6R)-5,10-methylene-5,6,7,8-tetrahydrofolate + glycine + H2O = (6S)-5,6,7,8-tetrahydrofolate + L-serine. Its pathway is one-carbon metabolism; tetrahydrofolate interconversion. It functions in the pathway amino-acid biosynthesis; glycine biosynthesis; glycine from L-serine: step 1/1. In terms of biological role, catalyzes the reversible interconversion of serine and glycine with tetrahydrofolate (THF) serving as the one-carbon carrier. This reaction serves as the major source of one-carbon groups required for the biosynthesis of purines, thymidylate, methionine, and other important biomolecules. Also exhibits THF-independent aldolase activity toward beta-hydroxyamino acids, producing glycine and aldehydes, via a retro-aldol mechanism. The protein is Serine hydroxymethyltransferase of Wolbachia pipientis subsp. Culex pipiens (strain wPip).